A 314-amino-acid chain; its full sequence is DNA-directed RNA polymerase subunit alpha (314 aa).

The tract at residues 1–227 (MLEIEKPKIE…DYLKLFVALT (227 aa)) is alpha N-terminal domain (alpha-NTD). An alpha C-terminal domain (alpha-CTD) region spans residues 244-314 (QDKILEMTIE…LGLSLRKSED (71 aa)).

This sequence belongs to the RNA polymerase alpha chain family. As to quaternary structure, homodimer. The RNAP catalytic core consists of 2 alpha, 1 beta, 1 beta' and 1 omega subunit. When a sigma factor is associated with the core the holoenzyme is formed, which can initiate transcription.

It catalyses the reaction RNA(n) + a ribonucleoside 5'-triphosphate = RNA(n+1) + diphosphate. Its function is as follows. DNA-dependent RNA polymerase catalyzes the transcription of DNA into RNA using the four ribonucleoside triphosphates as substrates. The polypeptide is DNA-directed RNA polymerase subunit alpha (Heliobacterium modesticaldum (strain ATCC 51547 / Ice1)).